The primary structure comprises 225 residues: Uridylate kinase (225 aa).

D6 serves as a coordination point for Mg(2+). 9-10 (GS) serves as a coordination point for ATP. G44 serves as a coordination point for UMP. ATP is bound by residues G45 and R49. UMP contacts are provided by residues D66 and 114–120 (THPGHTT). 2 residues coordinate Mg(2+): T120 and D121. 4 residues coordinate ATP: T140, N141, Y146, and D149. G179 serves as a coordination point for UMP. S182 serves as a coordination point for Mg(2+). An ATP-binding site is contributed by S182.

This sequence belongs to the UMP kinase family. In terms of assembly, homohexamer; trimer of dimers.

It localises to the cytoplasm. It catalyses the reaction UMP + ATP = UDP + ADP. Its pathway is pyrimidine metabolism; CTP biosynthesis via de novo pathway; UDP from UMP (UMPK route): step 1/1. Inhibited by UTP. Functionally, catalyzes the reversible phosphorylation of UMP to UDP, with ATP as the most efficient phosphate donor. This Pyrococcus furiosus (strain ATCC 43587 / DSM 3638 / JCM 8422 / Vc1) protein is Uridylate kinase (pyrH).